Here is a 78-residue protein sequence, read N- to C-terminus: Serine--glyoxylate aminotransferase (78 aa).

Belongs to the class-V pyridoxal-phosphate-dependent aminotransferase family. In terms of assembly, homodimer. It depends on pyridoxal 5'-phosphate as a cofactor. Expressed in leaves but not in root tissue or seedlings.

The protein resides in the peroxisome. The catalysed reaction is glyoxylate + L-serine = 3-hydroxypyruvate + glycine. It carries out the reaction glyoxylate + L-alanine = glycine + pyruvate. Its activity is regulated as follows. Inhibited by aminooxyacetate. The protein is Serine--glyoxylate aminotransferase of Triticum aestivum (Wheat).